Reading from the N-terminus, the 132-residue chain is Large ribosomal subunit protein uL14 (132 aa).

The protein belongs to the universal ribosomal protein uL14 family. In terms of assembly, part of the 50S ribosomal subunit. Forms a cluster with proteins L3 and L24e, part of which may contact the 16S rRNA in 2 intersubunit bridges.

Its function is as follows. Binds to 23S rRNA. Forms part of two intersubunit bridges in the 70S ribosome. This Methanosarcina acetivorans (strain ATCC 35395 / DSM 2834 / JCM 12185 / C2A) protein is Large ribosomal subunit protein uL14.